The following is a 474-amino-acid chain: PTS system N-acetylmuramic acid-specific EIIBC component (474 aa).

The region spanning 1–89 (MAKEISSELL…SELLGEAPVQ (89 aa)) is the PTS EIIB type-1 domain. At 1 to 123 (MAKEISSELL…LAKFATIFTP (123 aa)) the chain is on the cytoplasmic side. Cysteine 29 (phosphocysteine intermediate; for EIIB activity) is an active-site residue. Positions 115–474 (AKFATIFTPL…LFGCRNVNLD (360 aa)) constitute a PTS EIIC type-1 domain. Residues 124–144 (LIPGFIAAGLLLGIATLIATV) traverse the membrane as a helical segment. Residues 145-157 (MHVPADAQGTLPD) lie on the Periplasmic side of the membrane. The chain crosses the membrane as a helical span at residues 158-178 (ALNFMKVFSKGLFTFLVILVG). Residues 179-180 (YN) lie on the Cytoplasmic side of the membrane. Residues 181 to 201 (AAQAFGGTGVNGAIIAALFLL) traverse the membrane as a helical segment. Topologically, residues 202–217 (GYNPAATTGYYAGFHD) are periplasmic. A helical membrane pass occupies residues 218–238 (FFGLPIDPRGNIIGVLIAAWA). The Cytoplasmic portion of the chain corresponds to 239 to 260 (CARIEGMVRRFMPDDLDMLLTS). A helical membrane pass occupies residues 261–281 (LITLLITATLAYLIIMPLGGW). Over 282–301 (LFEGMSWLFMHLNSNPLGCA) the chain is Periplasmic. The helical transmembrane segment at 302–322 (VLAGLFLIAVVFGVHQGFIPV) threads the bilayer. Topologically, residues 323-334 (YLALMDSQGFNS) are cytoplasmic. The chain crosses the membrane as a helical span at residues 335-355 (LFPILSMAGAGQVGAALALYW). The Periplasmic segment spans residues 356-368 (RAQPHSALRSQVR). The helical transmembrane segment at 369 to 389 (GAIIPGLLGVGEPLIYGVTLP) threads the bilayer. The Cytoplasmic portion of the chain corresponds to 390–393 (RMKP). A helical membrane pass occupies residues 394 to 414 (FITACLGGAAGGLFIGLIAWW). At 415 to 440 (GLPMGLNSAFGPSGLVALPLMTSAQG) the chain is on the periplasmic side. The helical transmembrane segment at 441–461 (ILPAMAVYAGGILVAWVCGFI) threads the bilayer. Residues 462–474 (FTTLFGCRNVNLD) lie on the Cytoplasmic side of the membrane.

The protein resides in the cell inner membrane. It carries out the reaction N-acetyl-beta-D-muramate(out) + N(pros)-phospho-L-histidyl-[protein] = N-acetyl-beta-D-muramate 6-phosphate(in) + L-histidyl-[protein]. In terms of biological role, the phosphoenolpyruvate-dependent sugar phosphotransferase system (sugar PTS), a major carbohydrate active transport system, catalyzes the phosphorylation of incoming sugar substrates concomitantly with their translocation across the cell membrane. This system is involved in N-acetylmuramic acid (MurNAc) transport, yielding cytoplasmic MurNAc-6-P. Is also able to take up anhydro-N-acetylmuramic acid (anhMurNAc), but cannot phosphorylate the carbon 6, probably because of the 1,6-anhydro ring. The sequence is that of PTS system N-acetylmuramic acid-specific EIIBC component (murP) from Escherichia coli O157:H7.